Reading from the N-terminus, the 55-residue chain is Large ribosomal subunit protein bL33 (55 aa).

This sequence belongs to the bacterial ribosomal protein bL33 family.

The sequence is that of Large ribosomal subunit protein bL33 from Edwardsiella ictaluri (strain 93-146).